Reading from the N-terminus, the 81-residue chain is RNA-binding protein Hfq (81 aa).

The region spanning 9–68 (DPFLNVLRRERVPVFIYLINGIKLQGEIESFDKFVILLRNTVNQMIYKHAISTIVPSRVV) is the Sm domain.

Belongs to the Hfq family. Homohexamer.

Functionally, RNA chaperone that binds small regulatory RNA (sRNAs) and mRNAs to facilitate mRNA translational regulation in response to envelope stress, environmental stress and changes in metabolite concentrations. Also binds with high specificity to tRNAs. The protein is RNA-binding protein Hfq of Blochmanniella pennsylvanica (strain BPEN).